The sequence spans 345 residues: 4-hydroxyproline 2-epimerase 1 (345 aa).

Q85 provides a ligand contact to substrate. Catalysis depends on S93, which acts as the Proton acceptor. Substrate-binding positions include 94-95 (GS) and D251. Residue C255 is the Proton donor of the active site. Substrate is bound at residue 256 to 257 (GT).

The protein belongs to the proline racemase family.

The catalysed reaction is trans-4-hydroxy-L-proline = cis-4-hydroxy-D-proline. Catalyzes the epimerization of trans-4-hydroxy-L-proline (t4LHyp) to cis-4-hydroxy-D-proline (c4DHyp). May be involved in a degradation pathway of t4LHyp. Can also catalyze the epimerization of trans-3-hydroxy-L-proline (t3LHyp) to cis-3-hydroxy-D-proline (c3DHyp) in vitro. Displays no proline racemase activity. The chain is 4-hydroxyproline 2-epimerase 1 from Rhizobium rhizogenes (strain K84 / ATCC BAA-868) (Agrobacterium radiobacter).